Here is a 276-residue protein sequence, read N- to C-terminus: 3-methyl-2-oxobutanoate hydroxymethyltransferase (276 aa).

2 residues coordinate Mg(2+): Asp-44 and Asp-83. Residues 44 to 45 (DS), Asp-83, and Lys-112 contribute to the 3-methyl-2-oxobutanoate site. Mg(2+) is bound at residue Glu-114. Glu-180 serves as the catalytic Proton acceptor. Residues 256–276 (PTEAQSSRMKPDELSRALNAE) form a disordered region.

The protein belongs to the PanB family. Homodecamer; pentamer of dimers. Mg(2+) is required as a cofactor.

It is found in the cytoplasm. The enzyme catalyses 3-methyl-2-oxobutanoate + (6R)-5,10-methylene-5,6,7,8-tetrahydrofolate + H2O = 2-dehydropantoate + (6S)-5,6,7,8-tetrahydrofolate. The protein operates within cofactor biosynthesis; (R)-pantothenate biosynthesis; (R)-pantoate from 3-methyl-2-oxobutanoate: step 1/2. In terms of biological role, catalyzes the reversible reaction in which hydroxymethyl group from 5,10-methylenetetrahydrofolate is transferred onto alpha-ketoisovalerate to form ketopantoate. This chain is 3-methyl-2-oxobutanoate hydroxymethyltransferase, found in Gluconacetobacter diazotrophicus (strain ATCC 49037 / DSM 5601 / CCUG 37298 / CIP 103539 / LMG 7603 / PAl5).